The following is a 236-amino-acid chain: Small ribosomal subunit protein uS2c (236 aa).

The protein belongs to the universal ribosomal protein uS2 family.

It is found in the plastid. It localises to the chloroplast. The protein is Small ribosomal subunit protein uS2c (rps2) of Draba nemorosa (Woodland whitlowgrass).